Reading from the N-terminus, the 383-residue chain is Dephospho-CoA kinase (383 aa).

Residues 3–201 (RIGLTGGMGA…RRLVPFERNL (199 aa)) form the DPCK domain. 11–16 (GAGKST) is a binding site for ATP. The segment at 196–383 (PFERNLRAAT…EVAERLLGTV (188 aa)) is UPF0157.

It in the N-terminal section; belongs to the CoaE family. In the C-terminal section; belongs to the UPF0157 (GrpB) family.

The protein localises to the cytoplasm. The catalysed reaction is 3'-dephospho-CoA + ATP = ADP + CoA + H(+). The protein operates within cofactor biosynthesis; coenzyme A biosynthesis; CoA from (R)-pantothenate: step 5/5. Catalyzes the phosphorylation of the 3'-hydroxyl group of dephosphocoenzyme A to form coenzyme A. In Nocardia farcinica (strain IFM 10152), this protein is Dephospho-CoA kinase.